The chain runs to 331 residues: UPF0194 membrane protein YbhG (331 aa).

The first 19 residues, 1–19, serve as a signal peptide directing secretion; the sequence is MKKPVVIGLAIAAIVAVIA. A coiled-coil region spans residues 107 to 208; that stretch reads EEIAQAAAAV…LDLQDTTLIA (102 aa).

It belongs to the UPF0194 family.

It localises to the periplasm. This Salmonella paratyphi A (strain ATCC 9150 / SARB42) protein is UPF0194 membrane protein YbhG.